Reading from the N-terminus, the 176-residue chain is Ribosome maturation factor RimM (176 aa).

The PRC barrel domain maps to 93–166 (EGEYYHADLI…RVVIEMPGEI (74 aa)).

Belongs to the RimM family. Binds ribosomal protein uS19.

Its subcellular location is the cytoplasm. Functionally, an accessory protein needed during the final step in the assembly of 30S ribosomal subunit, possibly for assembly of the head region. Essential for efficient processing of 16S rRNA. May be needed both before and after RbfA during the maturation of 16S rRNA. It has affinity for free ribosomal 30S subunits but not for 70S ribosomes. The chain is Ribosome maturation factor RimM from Rhodopseudomonas palustris (strain BisA53).